Here is a 505-residue protein sequence, read N- to C-terminus: MNNLYIFHYHYIKGGVSTVVRNIVKSLKDAYKITLFGSKKMGIDGIEEVLSYENVDFIDFPELGYIYYDSTDYKTFLELKESIKNKLNNYHDERAIYWAHNYNLGKNPAFTEAFKEFITTKNIPTIIQIHDFPECARWENYSFIRKFINSSLYPIRKNIQYATINLSDYNRLIKCGIPSENAFYLPNAVEFAKNKDKIDDIDKDEVINKLKKLGYNVDPTNKNILYPTRTIRRKNILEAVLINRLYGKSNLLVTLPANSDKERPYEKVVKETFESEKVKGAWAISAKDPSLFPYILNISDLFFSSSVLEGFGMIYLESKFNEKNFLTRKLDVIEDFKNIKEISYYDRFLVSLSPKEINKVKEKYEEQINKIPISEENKNHLRQDLNNKFDKDLIDFSFLPVELQKKFCMEEEAKLNDLKEINKEIFDKIEMLTSTNHIDQGINLEDFSLKAYKSKIFLLLDKVQARGNAPKGVQGSTKEIEDTIIDENILKSFLTIDNIRLLFSY.

Monomer in solution.

The enzyme catalyses (2R)-2-O-(alpha-D-glucopyranosyl)-3-phospho-glycerate + GDP-alpha-D-mannose = (2R)-2-O-[alpha-D-mannopyranosyl-(1-&gt;2)-alpha-D-glucopyranosyl]-3-phospho-glycerate + GDP + H(+). Its activity is regulated as follows. Not strictly dependent on divalent cations, but the presence of Mn(2+), Ca(2+), Mg(2+) or Co(2+) stimulates activity. Involved in the biosynthesis of the compatible solute mannosylglucosylglycerate through a phosphorylating pathway. Catalyzes the conversion of glucosyl-3-phosphoglycerate (GPG) to mannosylglucosyl-3-phosphoglycerate (MGPG). The sequence is that of Mannosylglucosyl-3-phosphoglycerate synthase from Petrotoga mobilis (strain DSM 10674 / SJ95).